We begin with the raw amino-acid sequence, 207 residues long: ATP-dependent dethiobiotin synthetase BioD (207 aa).

Position 11–16 (11–16 (DVGKTF)) interacts with ATP. T15 provides a ligand contact to Mg(2+). K31 is an active-site residue. S35 is a binding site for substrate. ATP is bound by residues D42, 95-98 (ETSG), and 155-156 (NQ). Mg(2+)-binding residues include D42 and E95.

This sequence belongs to the dethiobiotin synthetase family. In terms of assembly, homodimer. Mg(2+) is required as a cofactor.

The protein localises to the cytoplasm. It carries out the reaction (7R,8S)-7,8-diammoniononanoate + CO2 + ATP = (4R,5S)-dethiobiotin + ADP + phosphate + 3 H(+). Its pathway is cofactor biosynthesis; biotin biosynthesis; biotin from 7,8-diaminononanoate: step 1/2. Its function is as follows. Catalyzes a mechanistically unusual reaction, the ATP-dependent insertion of CO2 between the N7 and N8 nitrogen atoms of 7,8-diaminopelargonic acid (DAPA, also called 7,8-diammoniononanoate) to form a ureido ring. This chain is ATP-dependent dethiobiotin synthetase BioD, found in Chlamydia abortus (strain DSM 27085 / S26/3) (Chlamydophila abortus).